A 106-amino-acid chain; its full sequence is uncharacterized protein (106 aa).

This is an uncharacterized protein from Pyrococcus woesei.